The primary structure comprises 806 residues: Hyperosmolality-gated Ca2+ permeable channel 1.8 (806 aa).

A run of 10 helical transmembrane segments spans residues 7-27, 102-122, 157-177, 375-395, 427-447, 467-487, 512-532, 576-596, 626-646, and 650-670; these read IGVSALINLFGAFLFLIAFAV, IYTLGLKIFAPVMVLALVVLV, KFFFHIAVEYIFTFWACFMLY, LVIGVSVFALVFFYMIPIAFV, FLPGLALKIFLWILPTVLLIM, YYYFMLVNVFLGSIIAGTAFE, ATFFITYIMVDGWAGIAGEIL, FLLGIVYTAVTPILLPFILIF, VHGRIIASLLISQLLLMGLLA, and AADSTPLLIILPILTLSFHKY. Residues 726 to 786 are disordered; the sequence is SSSSSSEKET…HYASAYEQSS (61 aa). Residues 731–750 are compositionally biased toward basic and acidic residues; it reads SEKETHQEETPEVRVDKHET. Phosphothreonine is present on Thr735. A compositionally biased stretch (polar residues) spans 751-762; sequence QSSSPVTELGTS. Over residues 775 to 786 the composition is skewed to low complexity; it reads SSHYASAYEQSS.

Belongs to the CSC1 (TC 1.A.17) family.

Its subcellular location is the golgi apparatus membrane. The protein resides in the cell membrane. In terms of biological role, acts as an osmosensitive calcium-permeable cation channel. The chain is Hyperosmolality-gated Ca2+ permeable channel 1.8 from Arabidopsis thaliana (Mouse-ear cress).